Consider the following 166-residue polypeptide: Large ribosomal subunit protein mL49 (166 aa).

Residues 56 to 78 (RIPDPPKHEHYPTPSGWQPPRDP) are disordered.

It belongs to the mitochondrion-specific ribosomal protein mL49 family. Interacts with OXA1L.

Its subcellular location is the mitochondrion. In Macaca fascicularis (Crab-eating macaque), this protein is Large ribosomal subunit protein mL49 (MRPL49).